A 312-amino-acid polypeptide reads, in one-letter code: Carbamate kinase 2 (312 aa).

Belongs to the carbamate kinase family.

Its subcellular location is the cytoplasm. It carries out the reaction hydrogencarbonate + NH4(+) + ATP = carbamoyl phosphate + ADP + H2O + H(+). It functions in the pathway metabolic intermediate metabolism; carbamoyl phosphate degradation; CO(2) and NH(3) from carbamoyl phosphate: step 1/1. This Enterococcus faecalis (strain ATCC 700802 / V583) protein is Carbamate kinase 2 (arcC2).